Consider the following 142-residue polypeptide: Translation initiation factor 2 subunit beta (142 aa).

The protein belongs to the eIF-2-beta/eIF-5 family. Heterotrimer composed of an alpha, a beta and a gamma chain.

Functionally, eIF-2 functions in the early steps of protein synthesis by forming a ternary complex with GTP and initiator tRNA. The polypeptide is Translation initiation factor 2 subunit beta (Thermococcus kodakarensis (strain ATCC BAA-918 / JCM 12380 / KOD1) (Pyrococcus kodakaraensis (strain KOD1))).